The sequence spans 34 residues: Photosystem II reaction center protein M (34 aa).

A helical transmembrane segment spans residues 5-25; it reads ILAFIATTLFVLVPTAFLLII.

It belongs to the PsbM family. PSII is composed of 1 copy each of membrane proteins PsbA, PsbB, PsbC, PsbD, PsbE, PsbF, PsbH, PsbI, PsbJ, PsbK, PsbL, PsbM, PsbT, PsbX, PsbY, PsbZ, Psb30/Ycf12, at least 3 peripheral proteins of the oxygen-evolving complex and a large number of cofactors. It forms dimeric complexes.

It is found in the plastid. Its subcellular location is the chloroplast thylakoid membrane. One of the components of the core complex of photosystem II (PSII). PSII is a light-driven water:plastoquinone oxidoreductase that uses light energy to abstract electrons from H(2)O, generating O(2) and a proton gradient subsequently used for ATP formation. It consists of a core antenna complex that captures photons, and an electron transfer chain that converts photonic excitation into a charge separation. This subunit is found at the monomer-monomer interface. This chain is Photosystem II reaction center protein M, found in Citrus sinensis (Sweet orange).